Here is a 187-residue protein sequence, read N- to C-terminus: Peptidyl-tRNA hydrolase (187 aa).

Position 14 (tyrosine 14) interacts with tRNA. Histidine 19 (proton acceptor) is an active-site residue. 3 residues coordinate tRNA: tyrosine 60, asparagine 62, and asparagine 108.

The protein belongs to the PTH family. As to quaternary structure, monomer.

The protein resides in the cytoplasm. It carries out the reaction an N-acyl-L-alpha-aminoacyl-tRNA + H2O = an N-acyl-L-amino acid + a tRNA + H(+). Hydrolyzes ribosome-free peptidyl-tRNAs (with 1 or more amino acids incorporated), which drop off the ribosome during protein synthesis, or as a result of ribosome stalling. Its function is as follows. Catalyzes the release of premature peptidyl moieties from peptidyl-tRNA molecules trapped in stalled 50S ribosomal subunits, and thus maintains levels of free tRNAs and 50S ribosomes. The polypeptide is Peptidyl-tRNA hydrolase (Mycoplasmopsis synoviae (strain 53) (Mycoplasma synoviae)).